The chain runs to 167 residues: MKKLLILLTFVSFVFSKTFYYDVYVFFFRVGEIKIQIDKEKSYAEGKTLESMKWLYSYDFRFYEEKGDMKLYEREKEKVRVFGKDKIYEKKPWIPLLVDYLKTGKVKENNLFKVKKEGNKFIVIPLKSKRVKKIILKDGKVPKEIVIHGKVKIKLKLRKAEDDKGTV.

Residues 5 to 27 form a helical membrane-spanning segment; it reads LILLTFVSFVFSKTFYYDVYVFF.

The protein resides in the membrane. This is an uncharacterized protein from Aquifex aeolicus (strain VF5).